The chain runs to 196 residues: Transmembrane protein 126A (196 aa).

The Mitochondrial matrix segment spans residues 1-34 (MENHKSNNTKENITIVDISRKINQLPEAERNLLE). A helical membrane pass occupies residues 35 to 55 (HGSVYVGLNAALCGLIANSLF). The Mitochondrial intermembrane segment spans residues 56 to 57 (RR). A helical transmembrane segment spans residues 58–78 (ILNVTKARIAAGLPMAWIPFL). Residues 79–107 (TTDITYRCFVSFPLNTGDLDCETCTITRS) lie on the Mitochondrial matrix side of the membrane. The chain crosses the membrane as a helical span at residues 108–128 (GLIGLVIGGLYPVFLAIPVNG). Residues 129–159 (GLAARYQSALLPHKGNILSYWIRTSKPVFRK) are Mitochondrial intermembrane-facing. A helical membrane pass occupies residues 160 to 176 (MLFPIMLQTMFSAYLGS). Topologically, residues 177–196 (EQYKLLIKALQLSEPGKEIH) are mitochondrial matrix.

This sequence belongs to the TMEM126 family. As to quaternary structure, interacts with OXA1L; promoting cotranslational quality control in mitochondria.

It localises to the mitochondrion inner membrane. Its function is as follows. Protein required for the cotranslational protein quality control in the inner membrane of the mitochondria. Associates with newly synthesized polypeptides and may act as a chaperone that cooperates with OXA1L for the insertion of newly synthesized mitochondrial proteins into the inner membrane. Required for the assembly of the ND4 module of mitochondrial complex I. This Pongo abelii (Sumatran orangutan) protein is Transmembrane protein 126A (TMEM126A).